A 413-amino-acid chain; its full sequence is Serine hydroxymethyltransferase (413 aa).

Residues L117 and 121–123 contribute to the (6S)-5,6,7,8-tetrahydrofolate site; that span reads GHL. K226 carries the N6-(pyridoxal phosphate)lysine modification. (6S)-5,6,7,8-tetrahydrofolate contacts are provided by residues E239 and 349–351; that span reads SPF.

This sequence belongs to the SHMT family. As to quaternary structure, homodimer. Pyridoxal 5'-phosphate serves as cofactor.

It is found in the cytoplasm. It catalyses the reaction (6R)-5,10-methylene-5,6,7,8-tetrahydrofolate + glycine + H2O = (6S)-5,6,7,8-tetrahydrofolate + L-serine. The protein operates within one-carbon metabolism; tetrahydrofolate interconversion. It functions in the pathway amino-acid biosynthesis; glycine biosynthesis; glycine from L-serine: step 1/1. In terms of biological role, catalyzes the reversible interconversion of serine and glycine with tetrahydrofolate (THF) serving as the one-carbon carrier. This reaction serves as the major source of one-carbon groups required for the biosynthesis of purines, thymidylate, methionine, and other important biomolecules. Also exhibits THF-independent aldolase activity toward beta-hydroxyamino acids, producing glycine and aldehydes, via a retro-aldol mechanism. The chain is Serine hydroxymethyltransferase from Bacillus cereus (strain ATCC 10987 / NRS 248).